The primary structure comprises 241 residues: uncharacterized protein (241 aa).

It belongs to the AB hydrolase superfamily. AB hydrolase 2 family.

This is an uncharacterized protein from Schizosaccharomyces pombe (strain 972 / ATCC 24843) (Fission yeast).